An 86-amino-acid chain; its full sequence is Large ribosomal subunit protein bL31B (86 aa).

It belongs to the bacterial ribosomal protein bL31 family. Type B subfamily. As to quaternary structure, part of the 50S ribosomal subunit.

The polypeptide is Large ribosomal subunit protein bL31B (Citrobacter koseri (strain ATCC BAA-895 / CDC 4225-83 / SGSC4696)).